Consider the following 297-residue polypeptide: Thiosulfate sulfurtransferase (297 aa).

Lysine 14 bears the N6-acetyllysine; alternate mark. An N6-succinyllysine; alternate modification is found at lysine 14. One can recognise a Rhodanese 1 domain in the interval 25 to 143 (VGPSLRVLDA…WLKEGHPVTS (119 aa)). Residue serine 35 is glycosylated (O-linked (GlcNAc) serine). Phosphoserine is present on serine 38. An N6-acetyllysine; alternate modification is found at lysine 136. Lysine 136 is subject to N6-succinyllysine; alternate. The segment at 144–159 (EPSRPEPAVFKATLNR) is hinge. Lysine 163 is modified (N6-acetyllysine). The 116-residue stretch at 173 to 288 (QSKRFQLVDS…WFRRAPPETR (116 aa)) folds into the Rhodanese 2 domain. Lysine 175 is subject to N6-acetyllysine; alternate. Lysine 175 is subject to N6-succinyllysine; alternate. Arginine 187 lines the substrate pocket. Position 224 is an N6-acetyllysine; alternate (lysine 224). N6-succinyllysine; alternate is present on lysine 224. Residue lysine 236 is modified to N6-acetyllysine. N6-acetyllysine; alternate is present on lysine 237. N6-succinyllysine; alternate is present on lysine 237. Cysteine 248 (cysteine persulfide intermediate) is an active-site residue. Lysine 250 contacts substrate.

In terms of assembly, monomer. Expressed in numerous tissues.

It is found in the mitochondrion matrix. It carries out the reaction thiosulfate + hydrogen cyanide = thiocyanate + sulfite + 2 H(+). In terms of biological role, together with MRPL18, acts as a mitochondrial import factor for the cytosolic 5S rRNA. Only the nascent unfolded cytoplasmic form is able to bind to the 5S rRNA. Involved in the formation of iron-sulfur complexes, cyanide detoxification or modification of sulfur-containing enzymes. Other thiol compounds, besides cyanide, can act as sulfur ion acceptors. Also has weak mercaptopyruvate sulfurtransferase (MST) activity. In Rattus norvegicus (Rat), this protein is Thiosulfate sulfurtransferase (Tst).